Consider the following 431-residue polypeptide: SH2 domain-containing protein 4B (431 aa).

Residues 201 to 235 form a disordered region; that stretch reads QASENEEREWEEQLRRSKAADEERSRRAQRARDEY. The segment covering 211-235 has biased composition (basic and acidic residues); it reads EEQLRRSKAADEERSRRAQRARDEY. In terms of domain architecture, SH2 spans 325–417; that stretch reads WFHGIISRES…SGGELLQEPC (93 aa).

This is SH2 domain-containing protein 4B (Sh2d4b) from Mus musculus (Mouse).